The sequence spans 302 residues: Sulfate adenylyltransferase subunit 2 (302 aa).

Residues 280 to 302 form a disordered region; that stretch reads RQGRVIDHDQAGSMEQKKREGYF.

The protein belongs to the PAPS reductase family. CysD subfamily. As to quaternary structure, heterodimer composed of CysD, the smaller subunit, and CysN.

The enzyme catalyses sulfate + ATP + H(+) = adenosine 5'-phosphosulfate + diphosphate. The protein operates within sulfur metabolism; hydrogen sulfide biosynthesis; sulfite from sulfate: step 1/3. Functionally, with CysN forms the ATP sulfurylase (ATPS) that catalyzes the adenylation of sulfate producing adenosine 5'-phosphosulfate (APS) and diphosphate, the first enzymatic step in sulfur assimilation pathway. APS synthesis involves the formation of a high-energy phosphoric-sulfuric acid anhydride bond driven by GTP hydrolysis by CysN coupled to ATP hydrolysis by CysD. This Hahella chejuensis (strain KCTC 2396) protein is Sulfate adenylyltransferase subunit 2.